The primary structure comprises 70 residues: Small, acid-soluble spore protein alpha (70 aa).

The protein belongs to the alpha/beta-type SASP family.

SASP are bound to spore DNA. They are double-stranded DNA-binding proteins that cause DNA to change to an a-like conformation. They protect the DNA backbone from chemical and enzymatic cleavage and are thus involved in dormant spore's high resistance to UV light. This is Small, acid-soluble spore protein alpha from Paraclostridium bifermentans (Clostridium bifermentans).